The primary structure comprises 300 residues: GTPase Era (300 aa).

The 169-residue stretch at R8–E176 folds into the Era-type G domain. The tract at residues G16–S23 is G1. Position 16 to 23 (G16 to S23) interacts with GTP. A G2 region spans residues Q42 to H46. The segment at D63–G66 is G3. GTP contacts are provided by residues D63 to M67 and N125 to D128. The tract at residues N125–D128 is G4. Positions I155 to A157 are G5. Positions V199–G283 constitute a KH type-2 domain.

This sequence belongs to the TRAFAC class TrmE-Era-EngA-EngB-Septin-like GTPase superfamily. Era GTPase family. Monomer.

Its subcellular location is the cytoplasm. It localises to the cell inner membrane. Its function is as follows. An essential GTPase that binds both GDP and GTP, with rapid nucleotide exchange. Plays a role in 16S rRNA processing and 30S ribosomal subunit biogenesis and possibly also in cell cycle regulation and energy metabolism. This Pseudomonas putida (strain W619) protein is GTPase Era.